The following is a 1054-amino-acid chain: Disks large-associated protein 2 (1054 aa).

2 disordered regions span residues 32–87 (EPEE…SGSR) and 242–301 (SHSL…SDDN). Residues 242 to 255 (SHSLEGSSKSNANG) show a composition bias toward polar residues. Basic residues predominate over residues 267-281 (HAHHAKHSKRSKSKE). The segment covering 289–299 (RPGMSSWWSSD) has biased composition (low complexity). S298, S304, S386, and S452 each carry phosphoserine. 2 disordered regions span residues 442-464 (GDEE…ILPE) and 609-666 (YKKT…TDSL). Residues 628 to 641 (VTAQSSTESTQDAY) show a composition bias toward polar residues. Residues S662, S665, S668, and S715 each carry the phosphoserine modification. Residues 719 to 746 (QDSEFPEHQPYPRSDVETATDSDTESRG) are disordered. T738 carries the phosphothreonine modification. Phosphoserine occurs at positions 740, 771, 806, 978, and 1007. Composition is skewed to basic and acidic residues over residues 977–987 (ESPERKEERKV) and 1002–1020 (ITRE…EARR). The tract at residues 977-1021 (ESPERKEERKVPPPIPKKPPKGKFPITREKSLDLPDRQRQEARRR) is disordered.

This sequence belongs to the SAPAP family. In terms of assembly, interacts with DLG1 and DLG4/PSD-95. Expressed in brain and kidney.

Its subcellular location is the cell membrane. It localises to the postsynaptic density. It is found in the synapse. In terms of biological role, may play a role in the molecular organization of synapses and neuronal cell signaling. Could be an adapter protein linking ion channel to the subsynaptic cytoskeleton. May induce enrichment of PSD-95/SAP90 at the plasma membrane. The protein is Disks large-associated protein 2 of Homo sapiens (Human).